Reading from the N-terminus, the 312-residue chain is Acetyl-coenzyme A carboxylase carboxyl transferase subunit alpha (312 aa).

Residues 36–286 enclose the CoA carboxyltransferase C-terminal domain; it reads RLDKEVKSIY…KEYFLDALRT (251 aa).

Belongs to the AccA family. Acetyl-CoA carboxylase is a heterohexamer composed of biotin carboxyl carrier protein (AccB), biotin carboxylase (AccC) and two subunits each of ACCase subunit alpha (AccA) and ACCase subunit beta (AccD).

The protein resides in the cytoplasm. The catalysed reaction is N(6)-carboxybiotinyl-L-lysyl-[protein] + acetyl-CoA = N(6)-biotinyl-L-lysyl-[protein] + malonyl-CoA. The protein operates within lipid metabolism; malonyl-CoA biosynthesis; malonyl-CoA from acetyl-CoA: step 1/1. Its function is as follows. Component of the acetyl coenzyme A carboxylase (ACC) complex. First, biotin carboxylase catalyzes the carboxylation of biotin on its carrier protein (BCCP) and then the CO(2) group is transferred by the carboxyltransferase to acetyl-CoA to form malonyl-CoA. The sequence is that of Acetyl-coenzyme A carboxylase carboxyl transferase subunit alpha from Helicobacter pylori (strain HPAG1).